Consider the following 240-residue polypeptide: Pyridoxine 5'-phosphate synthase (240 aa).

Asparagine 7 contacts 3-amino-2-oxopropyl phosphate. 9 to 10 serves as a coordination point for 1-deoxy-D-xylulose 5-phosphate; that stretch reads DH. A 3-amino-2-oxopropyl phosphate-binding site is contributed by arginine 18. The active-site Proton acceptor is the histidine 43. Arginine 45 and histidine 50 together coordinate 1-deoxy-D-xylulose 5-phosphate. Catalysis depends on glutamate 70, which acts as the Proton acceptor. A 1-deoxy-D-xylulose 5-phosphate-binding site is contributed by threonine 100. Catalysis depends on histidine 191, which acts as the Proton donor. Residues glycine 192 and 213–214 each bind 3-amino-2-oxopropyl phosphate; that span reads GH.

Belongs to the PNP synthase family. Homooctamer; tetramer of dimers.

The protein localises to the cytoplasm. The enzyme catalyses 3-amino-2-oxopropyl phosphate + 1-deoxy-D-xylulose 5-phosphate = pyridoxine 5'-phosphate + phosphate + 2 H2O + H(+). The protein operates within cofactor biosynthesis; pyridoxine 5'-phosphate biosynthesis; pyridoxine 5'-phosphate from D-erythrose 4-phosphate: step 5/5. In terms of biological role, catalyzes the complicated ring closure reaction between the two acyclic compounds 1-deoxy-D-xylulose-5-phosphate (DXP) and 3-amino-2-oxopropyl phosphate (1-amino-acetone-3-phosphate or AAP) to form pyridoxine 5'-phosphate (PNP) and inorganic phosphate. The chain is Pyridoxine 5'-phosphate synthase from Crocosphaera subtropica (strain ATCC 51142 / BH68) (Cyanothece sp. (strain ATCC 51142)).